The sequence spans 248 residues: Glycoprotein BILF2 (248 aa).

Residues 1–17 form the signal peptide; the sequence is MTHLVLLLCCCVGSVCA. Residues 19–125 enclose the Ig-like domain; the sequence is FSDLVKFENV…NVTLRNCSVA (107 aa). N-linked (GlcNAc...) asparagine; by host glycosylation is found at Asn-27, Asn-37, Asn-45, Asn-73, Asn-83, Asn-92, Asn-95, Asn-104, Asn-116, Asn-121, Asn-131, and Asn-144. Cys-40 and Cys-115 are oxidised to a cystine. Positions 167 to 191 are disordered; the sequence is VSHTTSTSHRPHRRPVSKRPTHKPV. Residues 175–188 are compositionally biased toward basic residues; the sequence is HRPHRRPVSKRPTH. A helical membrane pass occupies residues 210-230; the sequence is WALLLITCAVVAPVLLIIIIS.

It belongs to the Epstein-Barr virus BILF2 protein family.

Its subcellular location is the membrane. The sequence is that of Glycoprotein BILF2 from Epstein-Barr virus (strain B95-8) (HHV-4).